The primary structure comprises 733 residues: Ribosomal protein S6 kinase alpha-2 (733 aa).

The region spanning 59-318 (FELLKVLGQG…VEEIKRHPFF (260 aa)) is the Protein kinase 1 domain. ATP is bound by residues 65–73 (LGQGSYGKV) and K91. D184 (proton acceptor) is an active-site residue. Residue S218 is modified to Phosphoserine; by PDPK1. In terms of domain architecture, AGC-kinase C-terminal spans 319-388 (VTIDWNTLYR…VASSLIQEPS (70 aa)). S377 carries the post-translational modification Phosphoserine. One can recognise a Protein kinase 2 domain in the interval 415–672 (YEIKEDIGVG…AMQVLKHPWV (258 aa)). ATP-binding positions include 421 to 429 (IGVGSYSVC) and K444. D532 (proton acceptor) is an active-site residue.

This sequence belongs to the protein kinase superfamily. AGC Ser/Thr protein kinase family. S6 kinase subfamily. In terms of assembly, forms a complex with either MAPK1/ERK2 or MAPK3/ERK1 in quiescent cells. Transiently dissociates following mitogenic stimulation. Interacts with FBXO5; cooperate to induce the metaphase arrest of early blastomeres; increases and stabilizes interaction of FBXO5 with CDC20. Mg(2+) is required as a cofactor. Activated by phosphorylation at Ser-218 by PDPK1. Autophosphorylated on Ser-377, as part of the activation process. May be phosphorylated at Thr-356 and Ser-360 by MAPK1/ERK2 and MAPK3/ERK1. In terms of processing, N-terminal myristoylation results in an activated kinase in the absence of added growth factors. Widely expressed with higher expression in lung, skeletal muscle, brain, uterus, ovary, thyroid and prostate.

It is found in the nucleus. The protein localises to the cytoplasm. The enzyme catalyses L-seryl-[protein] + ATP = O-phospho-L-seryl-[protein] + ADP + H(+). It carries out the reaction L-threonyl-[protein] + ATP = O-phospho-L-threonyl-[protein] + ADP + H(+). With respect to regulation, upon extracellular signal or mitogen stimulation, phosphorylated at Thr-570 in the C-terminal kinase domain (CTKD) by MAPK1/ERK2 and MAPK3/ERK1. The activated CTKD then autophosphorylates Ser-377, allowing binding of PDPK1, which in turn phosphorylates Ser-218 in the N-terminal kinase domain (NTDK) leading to the full activation of the protein and subsequent phosphorylation of the substrates by the NTKD. Functionally, serine/threonine-protein kinase that acts downstream of ERK (MAPK1/ERK2 and MAPK3/ERK1) signaling and mediates mitogenic and stress-induced activation of transcription factors, regulates translation, and mediates cellular proliferation, survival, and differentiation. May function as tumor suppressor in epithelial ovarian cancer cells. The protein is Ribosomal protein S6 kinase alpha-2 (RPS6KA2) of Homo sapiens (Human).